We begin with the raw amino-acid sequence, 320 residues long: NAD kinase (320 aa).

Residue Asp-96 is the Proton acceptor of the active site. Residues 96 to 97 (DG), Arg-101, 170 to 171 (NE), Asp-200, and 211 to 216 (TAYAFS) each bind NAD(+).

It belongs to the NAD kinase family. A divalent metal cation serves as cofactor.

It is found in the cytoplasm. It carries out the reaction NAD(+) + ATP = ADP + NADP(+) + H(+). In terms of biological role, involved in the regulation of the intracellular balance of NAD and NADP, and is a key enzyme in the biosynthesis of NADP. Catalyzes specifically the phosphorylation on 2'-hydroxyl of the adenosine moiety of NAD to yield NADP. The sequence is that of NAD kinase from Rhodococcus jostii (strain RHA1).